A 139-amino-acid chain; its full sequence is MDFSNSLFNLSKIEDSDNDTYRNSDCLSERFKKISKTRSIKWSSESDLTKMCSYDVAVETMRRNSLEEVSQCMQDRLNAGTENILETGEVSDENSLKKKTFLMNMFRTAVLKVMTDPSGNDVEGMYVRSLRFGMWYLQR.

This is an uncharacterized protein from Caenorhabditis elegans.